The primary structure comprises 120 residues: Neuromedin-B (120 aa).

An N-terminal signal peptide occupies residues 1-29 (MSAVPLTRMLPLRFLTHLLLLSFIPLYFC). The propeptide occupies 30–44 (MEFSEDARNIEKIRR). Residue Met-54 is modified to Methionine amide. A propeptide spanning residues 58 to 120 (SLQDTYNPSE…MDDYIKTTQK (63 aa)) is cleaved from the precursor.

It belongs to the bombesin/neuromedin-B/ranatensin family. Brain, intestine, and ovaries and early embryos (stages 2 and 10).

The protein localises to the secreted. Its function is as follows. Stimulates smooth muscle contraction. This chain is Neuromedin-B (nmb), found in Xenopus laevis (African clawed frog).